The chain runs to 980 residues: Peroxisomal ATPase PEX6 (980 aa).

At R119 the chain carries Omega-N-methylarginine. ATP-binding positions include 470 to 477 and 744 to 751; these read GPPGSGKT and GPPGTGKT.

Belongs to the AAA ATPase family. As to quaternary structure, interacts with PEX1; forming the PEX1-PEX6 AAA ATPase complex, which is composed of a heterohexamer formed by a trimer of PEX1-PEX6 dimers. Interacts with PEX26; interaction is direct and promotes recruitment to peroxisomal membranes. Interacts with ZFAND6.

The protein resides in the cytoplasm. The protein localises to the cytosol. It is found in the peroxisome membrane. Its subcellular location is the cell projection. It localises to the cilium. The protein resides in the photoreceptor outer segment. It catalyses the reaction ATP + H2O = ADP + phosphate + H(+). Functionally, component of the PEX1-PEX6 AAA ATPase complex, a protein dislocase complex that mediates the ATP-dependent extraction of the PEX5 receptor from peroxisomal membranes, an essential step for PEX5 recycling. Specifically recognizes PEX5 monoubiquitinated at 'Cys-11', and pulls it out of the peroxisome lumen through the PEX2-PEX10-PEX12 retrotranslocation channel. Extraction by the PEX1-PEX6 AAA ATPase complex is accompanied by unfolding of the TPR repeats and release of bound cargo from PEX5. This chain is Peroxisomal ATPase PEX6, found in Cricetulus griseus (Chinese hamster).